The primary structure comprises 607 residues: Chaperone protein dnaK (607 aa).

Positions 579 to 591 are enriched in polar residues; sequence KASETSNAKTNGK. A disordered region spans residues 579 to 607; sequence KASETSNAKTNGKASEKEDVIDADFKAQE. Residues 592–607 are compositionally biased toward basic and acidic residues; it reads ASEKEDVIDADFKAQE.

Belongs to the heat shock protein 70 family.

The protein localises to the plastid. It localises to the chloroplast. In terms of biological role, acts as a chaperone. This Cyanidioschyzon merolae (strain NIES-3377 / 10D) (Unicellular red alga) protein is Chaperone protein dnaK.